An 85-amino-acid polypeptide reads, in one-letter code: uncharacterized protein (85 aa).

This sequence belongs to the SF3B5 family.

This is an uncharacterized protein from Schizosaccharomyces pombe (strain 972 / ATCC 24843) (Fission yeast).